A 703-amino-acid chain; its full sequence is Ion-translocating oxidoreductase complex subunit C (703 aa).

2 4Fe-4S ferredoxin-type domains span residues 368–397 and 407–436; these read MAPQEQEQSCIRCGLCVDACPAGLLPQQLY and KARNHNLFDCIECGACAFVCPSNIPLVQYY. The [4Fe-4S] cluster site is built by Cys377, Cys380, Cys383, Cys387, Cys416, Cys419, Cys422, and Cys426. Disordered stretches follow at residues 505–558 and 653–674; these read AVPA…EDPR and AQQATAVETPAESPAVVTEEDP. The span at 524 to 539 shows a compositional bias: basic and acidic residues; it reads AAREARKAQARERRAQ.

Belongs to the 4Fe4S bacterial-type ferredoxin family. RnfC subfamily. The complex is composed of six subunits: RnfA, RnfB, RnfC, RnfD, RnfE and RnfG. The cofactor is [4Fe-4S] cluster.

The protein resides in the cell inner membrane. Part of a membrane-bound complex that couples electron transfer with translocation of ions across the membrane. This is Ion-translocating oxidoreductase complex subunit C from Serratia proteamaculans (strain 568).